A 181-amino-acid polypeptide reads, in one-letter code: ECF RNA polymerase sigma factor RpoE (181 aa).

The interval 29-96 (LFQHFAPKVK…RRIDGLRKDR (68 aa)) is sigma-70 factor domain-2. The short motif at 53-56 (ECAQ) is the Interaction with polymerase core subunit RpoC element. The interval 129 to 178 (AIARLPEAQRALIERAFFGDLTHRELAAETGLPLGTIKSRIRLALDRLRQ) is sigma-70 factor domain-4. Residues 151 to 170 (HRELAAETGLPLGTIKSRIR) constitute a DNA-binding region (H-T-H motif).

Belongs to the sigma-70 factor family. ECF subfamily. As to quaternary structure, interacts transiently with the RNA polymerase catalytic core formed by RpoA, RpoB, RpoC and RpoZ (2 alpha, 1 beta, 1 beta' and 1 omega subunit) to form the RNA polymerase holoenzyme that can initiate transcription. Forms a 1:1 complex (via sigma-70 factor domain 4) with anti-sigma factor ChrR; this inhibits the interaction of RpoE with the RNA polymerase catalytic core.

In terms of biological role, sigma factors are initiation factors that promote the attachment of RNA polymerase to specific initiation sites and are then released. Extracytoplasmic function (ECF) sigma factors are held in an inactive form by a cognate anti-sigma factor until released. Sigma-E controls a transcriptional response to singlet oxygen, a by-product of photosynthesis; its continuous activity requires constant exposure to singlet oxygen. The regulon has about 180 genes that protect against or repair damage induced by singlet oxygen, including itself and rpoH2, a heat shock-responsive sigma factor. This Cereibacter sphaeroides (strain ATCC 17023 / DSM 158 / JCM 6121 / CCUG 31486 / LMG 2827 / NBRC 12203 / NCIMB 8253 / ATH 2.4.1.) (Rhodobacter sphaeroides) protein is ECF RNA polymerase sigma factor RpoE (rpoE).